Here is a 483-residue protein sequence, read N- to C-terminus: NADH-quinone oxidoreductase subunit N (483 aa).

A run of 14 helical transmembrane segments spans residues 13–33 (ALPE…DAAV), 39–57 (YLAY…FLTV), 76–96 (PLSD…LVYS), 110–130 (FFVL…ASHF), 131–151 (LTLY…VALQ), 165–185 (FVLG…VYGV), 206–226 (IPLV…LGAV), 240–260 (PTAM…AFVV), 277–297 (MLVI…IAQS), 302–322 (MFAY…LAGS), 330–350 (MFYV…ILLL), 373–393 (LAFV…TVGF), 406–426 (IGYV…AFYY), and 459–479 (LAVL…VQAI).

This sequence belongs to the complex I subunit 2 family. NDH-1 is composed of 14 different subunits. Subunits NuoA, H, J, K, L, M, N constitute the membrane sector of the complex.

It is found in the cell inner membrane. The enzyme catalyses a quinone + NADH + 5 H(+)(in) = a quinol + NAD(+) + 4 H(+)(out). Functionally, NDH-1 shuttles electrons from NADH, via FMN and iron-sulfur (Fe-S) centers, to quinones in the respiratory chain. The immediate electron acceptor for the enzyme in this species is believed to be ubiquinone. Couples the redox reaction to proton translocation (for every two electrons transferred, four hydrogen ions are translocated across the cytoplasmic membrane), and thus conserves the redox energy in a proton gradient. The polypeptide is NADH-quinone oxidoreductase subunit N (Thiobacillus denitrificans (strain ATCC 25259 / T1)).